The chain runs to 362 residues: Probable RNA methyltransferase Tbd_1951 (362 aa).

The active-site Proton acceptor is the Glu89. The Radical SAM core domain occupies 92–318; that stretch reads LLPRDGVCVS…AKLRHSAGQD (227 aa). Cys99 and Cys323 form a disulfide bridge. [4Fe-4S] cluster contacts are provided by Cys106, Cys110, and Cys113. Residues 151 to 152, Ser181, 204 to 206, and Asn280 each bind S-adenosyl-L-methionine; these read GE and SLH. Catalysis depends on Cys323, which acts as the S-methylcysteine intermediate. Positions 342–362 are disordered; the sequence is LPSAETPAASPKAAASIGFPG. Positions 343 to 362 are enriched in low complexity; the sequence is PSAETPAASPKAAASIGFPG.

This sequence belongs to the radical SAM superfamily. RlmN family. [4Fe-4S] cluster is required as a cofactor.

It localises to the cytoplasm. This Thiobacillus denitrificans (strain ATCC 25259 / T1) protein is Probable RNA methyltransferase Tbd_1951.